Here is a 305-residue protein sequence, read N- to C-terminus: Mitochondrial uncoupling protein 3 (305 aa).

3 Solcar repeats span residues 14–100 (TRIL…LKGL), 112–204 (LPLA…AKHF), and 213–299 (DNIF…FRLL). 6 helical membrane-spanning segments follow: residues 16–36 (ILLASLSAMVAESVTFPIDLT), 69–89 (VIGLYKGLSPAIIRHLFYTPI), 118–138 (ALVGGFSGVIAQVVASPADLV), 178–198 (KGVLPNIQRAFLVNMGELACY), 219–239 (TLASIMSGLASTSLSCPADVV), and 272–292 (WKGFFPTWARLGPWQFVFWVS).

The protein belongs to the mitochondrial carrier (TC 2.A.29) family.

Its subcellular location is the mitochondrion inner membrane. Its function is as follows. PUMPS are mitochondrial transporter proteins that create proton leaks across the inner mitochondrial membrane, thus uncoupling oxidative phosphorylation. This leads to a decrease in the efficiency of oxidative phosphorylation and an increase in heat production. May be involved in protecting plant cells against oxidative stress damage. The polypeptide is Mitochondrial uncoupling protein 3 (PUMP3) (Arabidopsis thaliana (Mouse-ear cress)).